The following is a 953-amino-acid chain: MSKKRLYEIAKELGKESKEIVQRAKELGLDVKSHSSSVEAATADKIVASFASAKKAVAGTSEAKAKPSTEPIKTEATPSKPAKDKTEQATNKPSPSPASSPKPVEEASAKAPASKQEQAQGTAAPKVTRPQSRNFKAEREARAKEQAERRKQQGQQRPQGNRNDRNDRRNNQNDRNDRNSQNRNDRRNRQEQGNQHRNQGQSQYNQQRQSFNQGPKIDFKARAAALKAEQNAEYARSSEERFKQAKANKEALREQNKRKEQAKLEDLFVEVESPKPTAKAPATPAPTAQDPAVDTRRKKQARPDKERDNFDHEEDGPRKQQKNRSSQNQVRNQKNSNWNNNKKTKKGKNNRNNNATPKPVTERKFHELPTEFEYTDGMTVAEIAKRIKREPAEIVKKLFMMGVMATQNQSLDGDTIELLMVDYGIEAKKKVEVDAADIERFFVEEGYINEDALEERPPVVTIMGHVDHGKTTLLDTLRNSRVATGEAGGITQHIGAYQIVEGGKKITFLDTPGHAAFTSMRARGASVTDITILVVAADDGVMPQTIEAINHSKAANVPIIVAINKIDKPGANPERVIGELAEHGVMSTAWGGDSEFVEISAKFNQNIDELLETVLLVAEIQELKADPTVRAIGTVIEARLDKGKGAVATLLVQQGTLNVQDPIVVGNTFGRVRAMTNDLGRRVKVAGPSTPVSITGLNETPMAGDHFAVYEDEKAARAAGEERAKRALLKQRQATHRVSLENLFDTLKAGEVKSVNVIIKADVQGSVEALAASLQKIEVEGVKVTIVHSAVGAINESDVTLAEASNAVIIGFNVRPTPQARQQAESDSVEIRLHSIIYKVIEEVEDAMKGMLDPEYQEKIIGEALIRETFKVSKVGTIGGFMVISGKVTRDSKVRVIRDGVVIYDGQLASLKHFKDDVKEVTNGREGGLMIEGYNDIQVDDTIEAYIMEEIKK.

The interval 53–368 (AKKAVAGTSE…PVTERKFHEL (316 aa)) is disordered. Composition is skewed to basic and acidic residues over residues 135 to 151 (FKAE…ERRK) and 162 to 190 (RNDR…RNRQ). The segment covering 191 to 214 (EQGNQHRNQGQSQYNQQRQSFNQG) has biased composition (low complexity). The span at 236–266 (RSSEERFKQAKANKEALREQNKRKEQAKLED) shows a compositional bias: basic and acidic residues. The span at 274 to 288 (PKPTAKAPATPAPTA) shows a compositional bias: low complexity. Over residues 301–318 (ARPDKERDNFDHEEDGPR) the composition is skewed to basic and acidic residues. The span at 332 to 341 (NQKNSNWNNN) shows a compositional bias: low complexity. Residues 455–622 (ERPPVVTIMG…TVLLVAEIQE (168 aa)) form the tr-type G domain. Residues 464 to 471 (GHVDHGKT) are G1. Residue 464-471 (GHVDHGKT) coordinates GTP. The tract at residues 489–493 (GITQH) is G2. The G3 stretch occupies residues 510-513 (DTPG). Residues 510–514 (DTPGH) and 564–567 (NKID) each bind GTP. Positions 564 to 567 (NKID) are G4. The tract at residues 600–602 (SAK) is G5.

Belongs to the TRAFAC class translation factor GTPase superfamily. Classic translation factor GTPase family. IF-2 subfamily.

Its subcellular location is the cytoplasm. In terms of biological role, one of the essential components for the initiation of protein synthesis. Protects formylmethionyl-tRNA from spontaneous hydrolysis and promotes its binding to the 30S ribosomal subunits. Also involved in the hydrolysis of GTP during the formation of the 70S ribosomal complex. The polypeptide is Translation initiation factor IF-2 (Streptococcus gordonii (strain Challis / ATCC 35105 / BCRC 15272 / CH1 / DL1 / V288)).